The primary structure comprises 317 residues: tRNA(Ile)-lysidine synthase (317 aa).

30–35 (SGGSDS) contributes to the ATP binding site.

Belongs to the tRNA(Ile)-lysidine synthase family.

The protein resides in the cytoplasm. It carries out the reaction cytidine(34) in tRNA(Ile2) + L-lysine + ATP = lysidine(34) in tRNA(Ile2) + AMP + diphosphate + H(+). In terms of biological role, ligates lysine onto the cytidine present at position 34 of the AUA codon-specific tRNA(Ile) that contains the anticodon CAU, in an ATP-dependent manner. Cytidine is converted to lysidine, thus changing the amino acid specificity of the tRNA from methionine to isoleucine. This is tRNA(Ile)-lysidine synthase from Chlamydia abortus (strain DSM 27085 / S26/3) (Chlamydophila abortus).